The sequence spans 388 residues: Putative 8-amino-7-oxononanoate synthase (388 aa).

Arg22 contributes to the substrate binding site. Position 109–110 (109–110 (GY)) interacts with pyridoxal 5'-phosphate. His134 is a substrate binding site. Pyridoxal 5'-phosphate-binding positions include Ser182, 207–210 (DEAH), and 237–240 (TLSK). At Lys240 the chain carries N6-(pyridoxal phosphate)lysine. Thr354 lines the substrate pocket.

This sequence belongs to the class-II pyridoxal-phosphate-dependent aminotransferase family. BioF subfamily. As to quaternary structure, homodimer. It depends on pyridoxal 5'-phosphate as a cofactor.

The enzyme catalyses 6-carboxyhexanoyl-[ACP] + L-alanine + H(+) = (8S)-8-amino-7-oxononanoate + holo-[ACP] + CO2. The protein operates within cofactor biosynthesis; biotin biosynthesis. In terms of biological role, catalyzes the decarboxylative condensation of pimeloyl-[acyl-carrier protein] and L-alanine to produce 8-amino-7-oxononanoate (AON), [acyl-carrier protein], and carbon dioxide. This chain is Putative 8-amino-7-oxononanoate synthase (bioF), found in Gloeobacter violaceus (strain ATCC 29082 / PCC 7421).